A 107-amino-acid chain; its full sequence is Large ribosomal subunit protein uL24 (107 aa).

It belongs to the universal ribosomal protein uL24 family. Part of the 50S ribosomal subunit.

In terms of biological role, one of two assembly initiator proteins, it binds directly to the 5'-end of the 23S rRNA, where it nucleates assembly of the 50S subunit. One of the proteins that surrounds the polypeptide exit tunnel on the outside of the subunit. The sequence is that of Large ribosomal subunit protein uL24 from Pelotomaculum thermopropionicum (strain DSM 13744 / JCM 10971 / SI).